Here is a 188-residue protein sequence, read N- to C-terminus: Peptidyl-tRNA hydrolase (188 aa).

A tRNA-binding site is contributed by Phe-14. His-19 acts as the Proton acceptor in catalysis. The tRNA site is built by Tyr-64, Asn-66, and Asn-112.

It belongs to the PTH family. Monomer.

It localises to the cytoplasm. It carries out the reaction an N-acyl-L-alpha-aminoacyl-tRNA + H2O = an N-acyl-L-amino acid + a tRNA + H(+). Hydrolyzes ribosome-free peptidyl-tRNAs (with 1 or more amino acids incorporated), which drop off the ribosome during protein synthesis, or as a result of ribosome stalling. In terms of biological role, catalyzes the release of premature peptidyl moieties from peptidyl-tRNA molecules trapped in stalled 50S ribosomal subunits, and thus maintains levels of free tRNAs and 50S ribosomes. This Onion yellows phytoplasma (strain OY-M) protein is Peptidyl-tRNA hydrolase.